A 1058-amino-acid polypeptide reads, in one-letter code: Zinc finger protein 865 (1058 aa).

Disordered regions lie at residues 1-24 (MEANQAGSGAGGGGSSGIGGEDGV), 58-134 (LPCT…PPLF), and 156-201 (GNLK…ACDP). Residues 8–21 (SGAGGGGSSGIGGE) show a composition bias toward gly residues. Positions 61-78 (TPGPPPQPPPQPPPPQYD) are enriched in pro residues. A compositionally biased stretch (low complexity) spans 93–113 (SSSSSSSSSSSSSSSSSSSSS). Positions 120 to 133 (PPLPPTFGAPPPPL) are enriched in pro residues. Residues 172–187 (GLGTPTGTPGPLTTPS) show a composition bias toward low complexity. 2 consecutive C2H2-type zinc fingers follow at residues 220 to 242 (FPCGVCQKSFKQSSHLVQHMLVH) and 248 to 270 (YECGICGRTYNHVSSLIRHRRCH). The segment at 269 to 342 (CHKDVPPTPT…PPGVAMPPSA (74 aa)) is disordered. Residues 294–324 (PVSTASATASSDPAAVSSGPSATPATPATST) show a composition bias toward low complexity. 9 C2H2-type zinc fingers span residues 350–372 (FACSLCWKVFKKPSHLHQHQIIH), 378–400 (FSCSVCSKSFNRRESLKRHVKTH), 407–429 (LPCGICGKVFRDASYLLKHQAAH), 439–461 (YPCDLCGKTYSAPQSLLRHKAAH), 546–568 (FCCGICGRAFGRRETLKRHERIH), 574–596 (HQCPVCGKRFRESFHLSKHHVVH), 602–624 (YKCELCGKVFGYPQSLTRHRQVH), 664–686 (YACSDCGEHFPDLFHVMSHKEAH), and 692–714 (YGCDACGKTFGFIENLMWHKLVH). Residues 459–486 (AAHAPPVATEPAKDGAASVPQPPPPFPP) are disordered. The disordered stretch occupies residues 721–743 (LLAPTPSGPQSSDGGSSGGGTDA). C2H2-type zinc fingers lie at residues 791 to 813 (FSCATCGQSFKHFLGLVTHKYVH), 819 to 841 (LGCGLCGQSFAGAYDLLLHRRSH), 847 to 869 (FRCPVCGKRFWEAALLMRHQRCH), 875 to 897 (YRCGVCGRGFLRSWYLRQHRVVH), 903 to 925 (FKCGVCAKHFAQSSSLAEHRRLH), 931 to 953 (QRCGACGKTFRYRSNLLEHQRLH), 959 to 981 (YRCEHCGKGFFYLSSVLRHQRAH), 988 to 1010 (LRCPACLKAFKDPGYFRKHLAAH), and 1016 to 1038 (FRCSSCGEGFANTYGLKKHRLMH). Lys-801 participates in a covalent cross-link: Glycyl lysine isopeptide (Lys-Gly) (interchain with G-Cter in SUMO2). A Glycyl lysine isopeptide (Lys-Gly) (interchain with G-Cter in SUMO2) cross-link involves residue Lys-1039.

Belongs to the krueppel C2H2-type zinc-finger protein family.

It is found in the nucleus. Its function is as follows. May be involved in transcriptional regulation. In Mus musculus (Mouse), this protein is Zinc finger protein 865 (Znf865).